The sequence spans 435 residues: 5-methylthioadenosine/S-adenosylhomocysteine deaminase (435 aa).

H65 and H67 together coordinate Zn(2+). Substrate-binding residues include E94, R150, and H189. H216 contacts Zn(2+). 2 residues coordinate substrate: E219 and D304. D304 provides a ligand contact to Zn(2+).

The protein belongs to the metallo-dependent hydrolases superfamily. MTA/SAH deaminase family. Zn(2+) serves as cofactor.

It carries out the reaction S-adenosyl-L-homocysteine + H2O + H(+) = S-inosyl-L-homocysteine + NH4(+). The enzyme catalyses S-methyl-5'-thioadenosine + H2O + H(+) = S-methyl-5'-thioinosine + NH4(+). Catalyzes the deamination of 5-methylthioadenosine and S-adenosyl-L-homocysteine into 5-methylthioinosine and S-inosyl-L-homocysteine, respectively. Is also able to deaminate adenosine. This chain is 5-methylthioadenosine/S-adenosylhomocysteine deaminase, found in Bacillus cytotoxicus (strain DSM 22905 / CIP 110041 / 391-98 / NVH 391-98).